Consider the following 512-residue polypeptide: tRNA-guanine(15) transglycosylase (512 aa).

D85 serves as the catalytic Nucleophile. D120 is a binding site for substrate. The Zn(2+) site is built by C272, C274, and C277.

It belongs to the archaeosine tRNA-ribosyltransferase family. Zn(2+) serves as cofactor.

It catalyses the reaction guanosine(15) in tRNA + 7-cyano-7-deazaguanine = 7-cyano-7-carbaguanosine(15) in tRNA + guanine. It participates in tRNA modification; archaeosine-tRNA biosynthesis. Functionally, exchanges the guanine residue with 7-cyano-7-deazaguanine (preQ0) at position 15 in the dihydrouridine loop (D-loop) of archaeal tRNAs. The chain is tRNA-guanine(15) transglycosylase from Aeropyrum pernix (strain ATCC 700893 / DSM 11879 / JCM 9820 / NBRC 100138 / K1).